The following is a 403-amino-acid chain: Phosphoserine phosphatase RsbP (403 aa).

Residues 1-42 (MDKQLNDAPCGFLALSEEGSIIAANRTLIKILDYEPEQVIGQ) form the PAS domain. One can recognise a PPM-type phosphatase domain in the interval 191 to 402 (QVQIDSYYNA…DDECFILVDV (212 aa)).

Mn(2+) is required as a cofactor.

It catalyses the reaction O-phospho-L-serine + H2O = L-serine + phosphate. The catalysed reaction is O-phospho-D-serine + H2O = D-serine + phosphate. Functionally, positive regulator of sigma-B activity. Dephosphorylates RsbV in response to energy stress. The polypeptide is Phosphoserine phosphatase RsbP (rsbP) (Bacillus subtilis (strain 168)).